The sequence spans 198 residues: Transcription antitermination protein NusB (198 aa).

The protein belongs to the NusB family.

Its function is as follows. Involved in transcription antitermination. Required for transcription of ribosomal RNA (rRNA) genes. Binds specifically to the boxA antiterminator sequence of the ribosomal RNA (rrn) operons. This chain is Transcription antitermination protein NusB, found in Methylococcus capsulatus (strain ATCC 33009 / NCIMB 11132 / Bath).